The sequence spans 293 residues: Elongation factor Ts (293 aa).

Residues 80-83 form an involved in Mg(2+) ion dislocation from EF-Tu region; sequence TDFV.

It belongs to the EF-Ts family.

It localises to the cytoplasm. In terms of biological role, associates with the EF-Tu.GDP complex and induces the exchange of GDP to GTP. It remains bound to the aminoacyl-tRNA.EF-Tu.GTP complex up to the GTP hydrolysis stage on the ribosome. This Paraburkholderia phytofirmans (strain DSM 17436 / LMG 22146 / PsJN) (Burkholderia phytofirmans) protein is Elongation factor Ts.